Here is a 422-residue protein sequence, read N- to C-terminus: MLFTRSVARISSKFLRNRSFYGSSQSLASHRFAIIPDQGHSCSDSPHKGYVCRTTYSLKSPVFGGFSHQLYHQSSSLVEEELDPFSLVADELSLLSNKLREMVLAEVPKLASAAEYFFKRGVQGKQFRSTILLLMATALNVRVPEALIGESTDIVTSELRVRQRGIAEITEMIHVASLLHDDVLDDADTRRGVGSLNVVMGNKMSVLAGDFLLSRACGALAALKNTEVVALLATAVEHLVTGETMEITSSTEQRYSMDYYMQKTYYKTASLISNSCKAVAVLTGQTAEVAVLAFEYGRNLGLAFQLIDDILDFTGTSASLGKGSLSDIRHGVITAPILFAMEEFPQLREVVDQVEKDPRNVDIALEYLGKSKGIQRARELAMEHANLAAAAIGSLPETDNEDVKRSRRALIDLTHRVITRNK.

The transit peptide at 1-32 directs the protein to the chloroplast and mitochondrion; that stretch reads MLFTRSVARISSKFLRNRSFYGSSQSLASHRF. Isopentenyl diphosphate is bound by residues lysine 125, arginine 128, and histidine 174. Mg(2+)-binding residues include aspartate 181 and aspartate 185. Arginine 190 contributes to the an all-trans-polyprenyl diphosphate binding site. Arginine 191 contacts isopentenyl diphosphate. Lysine 267, threonine 268, glutamine 305, and lysine 322 together coordinate an all-trans-polyprenyl diphosphate.

This sequence belongs to the FPP/GGPP synthase family. In terms of assembly, homodimer. Requires Mg(2+) as cofactor. In terms of tissue distribution, ubiquitous. Highest expression in seeds and shoot apical meristem.

The protein localises to the plastid. It localises to the chloroplast. It is found in the mitochondrion. The enzyme catalyses 5 isopentenyl diphosphate + (2E,6E,10E)-geranylgeranyl diphosphate = all-trans-nonaprenyl diphosphate + 5 diphosphate. In terms of biological role, may be involved in the supply of solanesyl diphosphate for ubiquinone-9 (UQ-9) biosynthesis in mitochondria. Synthesizes C25 to C45 medium / long-chain products depending on the type of substrate available. Can use geranyl diphosphate, farnesyl diphosphate or geranylgeranyl diphosphate as substrates, but not dimethylallyl diphosphate. This chain is Solanesyl diphosphate synthase 3, chloroplastic/mitochondrial, found in Arabidopsis thaliana (Mouse-ear cress).